The chain runs to 241 residues: NAD(P)H-quinone oxidoreductase subunit K (241 aa).

Residues cysteine 60, cysteine 61, cysteine 125, and cysteine 156 each coordinate [4Fe-4S] cluster. The tract at residues 220–241 (SSQKEKITELPEKTEITNTEKD) is disordered. The span at 222-241 (QKEKITELPEKTEITNTEKD) shows a compositional bias: basic and acidic residues.

It belongs to the complex I 20 kDa subunit family. As to quaternary structure, NDH-1 can be composed of about 15 different subunits; different subcomplexes with different compositions have been identified which probably have different functions. [4Fe-4S] cluster is required as a cofactor.

The protein resides in the cellular thylakoid membrane. It carries out the reaction a plastoquinone + NADH + (n+1) H(+)(in) = a plastoquinol + NAD(+) + n H(+)(out). The catalysed reaction is a plastoquinone + NADPH + (n+1) H(+)(in) = a plastoquinol + NADP(+) + n H(+)(out). In terms of biological role, NDH-1 shuttles electrons from an unknown electron donor, via FMN and iron-sulfur (Fe-S) centers, to quinones in the respiratory and/or the photosynthetic chain. The immediate electron acceptor for the enzyme in this species is believed to be plastoquinone. Couples the redox reaction to proton translocation, and thus conserves the redox energy in a proton gradient. Cyanobacterial NDH-1 also plays a role in inorganic carbon-concentration. The protein is NAD(P)H-quinone oxidoreductase subunit K of Prochlorococcus marinus (strain MIT 9215).